The sequence spans 261 residues: Calcium-binding protein 8 (261 aa).

The disordered stretch occupies residues 1–41 (MRLPEQPGDGKPENETKGDQETPERGEEPRRSPAPDFPTWE). Over 1–234 (MRLPEQPGDG…QNRQTCVRKS (234 aa)) the chain is Cytoplasmic. Residues 8 to 33 (GDGKPENETKGDQETPERGEEPRRSP) are compositionally biased toward basic and acidic residues. EF-hand domains lie at 78 to 113 (EELD…LGYM) and 114 to 149 (PSEV…KLVS). Positions 91, 93, 95, 102, 127, 129, 131, 133, and 138 each coordinate Ca(2+). A helical; Anchor for type IV membrane protein membrane pass occupies residues 235 to 255 (LICAFAMAFIISVMLIAANQI). At 256-261 (LRSGME) the chain is on the extracellular side.

In terms of assembly, interacts with PI4KB. This binding competes with FREQ/NCS1 binding in a calcium-dependent manner. As to expression, brain-specific. High expression in the cerebellum, hippocampus, and cortex.

Its subcellular location is the golgi apparatus. It localises to the trans-Golgi network membrane. The protein resides in the cytoplasm. It is found in the perinuclear region. The protein localises to the cell membrane. Functionally, negatively regulates Golgi-to-plasma membrane trafficking by interacting with PI4KB and inhibiting its activity. May play a role in the physiology of neurons and is potentially important in memory and learning. The polypeptide is Calcium-binding protein 8 (Caln1) (Mus musculus (Mouse)).